A 228-amino-acid polypeptide reads, in one-letter code: MPRRGLVAGPDLEYFQRRYFTPAEVAQHNRPEDLWVSYLGRVYDLTSLAQEYKGNLLLKPIVEVAGQDISHWFDPKTRDIRKHIDPLTGCLRYCTPRGRFVHVPPQLPCSDWANDFGKPWWQGSYYEVGRLSAKTRSIRIINTLTSQEHTLEVGVLESIWEILHRYLPYNSHAASYTWKYEGKNLNMDFTLEENGIRDEEEEFDYLSMDGTLHTPAILLYFNDDLTEL.

The Cytochrome b5 heme-binding domain occupies 17-83 (RRYFTPAEVA…DPKTRDIRKH (67 aa)). Heme contacts are provided by Tyr52 and His83.

The protein belongs to the cytochrome b5 family.

It is found in the cytoplasm. Its subcellular location is the cytoskeleton. It localises to the cilium axoneme. Radial spoke stalk protein that binds heme under oxidizing conditions. Required for the coordinated beating of multiple cilia maybe by functioning in a redox signaling pathway. The protein is Cytochrome b5 domain-containing protein 1 of Homo sapiens (Human).